The primary structure comprises 338 residues: D-erythrose-4-phosphate dehydrogenase (338 aa).

11-12 (RI) is a binding site for NAD(+). Substrate is bound by residues 153-155 (SCT), Arg199, 212-213 (TK), and Arg235. Catalysis depends on Cys154, which acts as the Nucleophile. Residue Asn317 coordinates NAD(+).

The protein belongs to the glyceraldehyde-3-phosphate dehydrogenase family. Epd subfamily. As to quaternary structure, homotetramer.

It localises to the cytoplasm. The catalysed reaction is D-erythrose 4-phosphate + NAD(+) + H2O = 4-phospho-D-erythronate + NADH + 2 H(+). The protein operates within cofactor biosynthesis; pyridoxine 5'-phosphate biosynthesis; pyridoxine 5'-phosphate from D-erythrose 4-phosphate: step 1/5. Catalyzes the NAD-dependent conversion of D-erythrose 4-phosphate to 4-phosphoerythronate. The chain is D-erythrose-4-phosphate dehydrogenase from Shewanella baltica (strain OS223).